The sequence spans 201 residues: 3-isopropylmalate dehydratase small subunit (201 aa).

Belongs to the LeuD family. LeuD type 1 subfamily. Heterodimer of LeuC and LeuD.

It carries out the reaction (2R,3S)-3-isopropylmalate = (2S)-2-isopropylmalate. Its pathway is amino-acid biosynthesis; L-leucine biosynthesis; L-leucine from 3-methyl-2-oxobutanoate: step 2/4. In terms of biological role, catalyzes the isomerization between 2-isopropylmalate and 3-isopropylmalate, via the formation of 2-isopropylmaleate. The chain is 3-isopropylmalate dehydratase small subunit from Shewanella frigidimarina (strain NCIMB 400).